Consider the following 448-residue polypeptide: UDP-N-acetylmuramoylalanine--D-glutamate ligase (448 aa).

112 to 118 (GSNAKST) serves as a coordination point for ATP.

It belongs to the MurCDEF family.

The protein localises to the cytoplasm. It carries out the reaction UDP-N-acetyl-alpha-D-muramoyl-L-alanine + D-glutamate + ATP = UDP-N-acetyl-alpha-D-muramoyl-L-alanyl-D-glutamate + ADP + phosphate + H(+). It functions in the pathway cell wall biogenesis; peptidoglycan biosynthesis. Functionally, cell wall formation. Catalyzes the addition of glutamate to the nucleotide precursor UDP-N-acetylmuramoyl-L-alanine (UMA). The sequence is that of UDP-N-acetylmuramoylalanine--D-glutamate ligase from Acinetobacter baumannii (strain ATCC 17978 / DSM 105126 / CIP 53.77 / LMG 1025 / NCDC KC755 / 5377).